Reading from the N-terminus, the 387-residue chain is Patatin-01 (387 aa).

The N-terminal stretch at 1 to 23 (MATTKSFLILSVMILATTSSTFA) is a signal peptide. A PNPLA domain is found at 32-230 (LSIDGGGIKG…TVADPALLSV (199 aa)). Residues 36-41 (GGGIKG) carry the GXGXXG motif. The GXSXG motif lies at 75 to 79 (GTSTG). The active-site Nucleophile is Ser-77. Asn-115 is a glycosylation site (N-linked (GlcNAc...) asparagine). The Proton acceptor role is filled by Asp-216. Positions 216–218 (DGA) match the DGA/G motif. Residues 361-385 (ETYEEALKRFAKLLSDRKKLRANKA) adopt a coiled-coil conformation.

Belongs to the patatin family. In terms of tissue distribution, tuber.

The protein resides in the vacuole. In terms of biological role, probable lipolytic acyl hydrolase (LAH), an activity which is thought to be involved in the response of tubers to pathogens. The polypeptide is Patatin-01 (Solanum tuberosum (Potato)).